Here is a 389-residue protein sequence, read N- to C-terminus: Dual-specificity RNA methyltransferase RlmN (389 aa).

The active-site Proton acceptor is the E110. A Radical SAM core domain is found at 116–355 (EKDRATLCVS…TIVRKTRGDD (240 aa)). C123 and C360 are oxidised to a cystine. The [4Fe-4S] cluster site is built by C130, C134, and C137. Residues 184 to 185 (GE), S216, 238 to 240 (SLH), and N317 contribute to the S-adenosyl-L-methionine site. The S-methylcysteine intermediate role is filled by C360.

The protein belongs to the radical SAM superfamily. RlmN family. Requires [4Fe-4S] cluster as cofactor.

The protein localises to the cytoplasm. The catalysed reaction is adenosine(2503) in 23S rRNA + 2 reduced [2Fe-2S]-[ferredoxin] + 2 S-adenosyl-L-methionine = 2-methyladenosine(2503) in 23S rRNA + 5'-deoxyadenosine + L-methionine + 2 oxidized [2Fe-2S]-[ferredoxin] + S-adenosyl-L-homocysteine. It carries out the reaction adenosine(37) in tRNA + 2 reduced [2Fe-2S]-[ferredoxin] + 2 S-adenosyl-L-methionine = 2-methyladenosine(37) in tRNA + 5'-deoxyadenosine + L-methionine + 2 oxidized [2Fe-2S]-[ferredoxin] + S-adenosyl-L-homocysteine. Specifically methylates position 2 of adenine 2503 in 23S rRNA and position 2 of adenine 37 in tRNAs. m2A2503 modification seems to play a crucial role in the proofreading step occurring at the peptidyl transferase center and thus would serve to optimize ribosomal fidelity. The chain is Dual-specificity RNA methyltransferase RlmN from Erwinia tasmaniensis (strain DSM 17950 / CFBP 7177 / CIP 109463 / NCPPB 4357 / Et1/99).